The chain runs to 85 residues: Conotoxin Vx15a (85 aa).

The signal sequence occupies residues Met1–Ser23. Positions Asp24–Arg49 are excised as a propeptide. Gln50 bears the Pyrrolidone carboxylic acid mark.

It belongs to the conotoxin O2 superfamily. In terms of processing, contains 4 disulfide bonds. Expressed by the venom duct.

It is found in the secreted. The protein is Conotoxin Vx15a of Conus vexillum (Flag cone).